The chain runs to 498 residues: ATP synthase subunit beta, chloroplastic (498 aa).

ATP is bound at residue 172 to 179 (GGAGVGKT).

This sequence belongs to the ATPase alpha/beta chains family. As to quaternary structure, F-type ATPases have 2 components, CF(1) - the catalytic core - and CF(0) - the membrane proton channel. CF(1) has five subunits: alpha(3), beta(3), gamma(1), delta(1), epsilon(1). CF(0) has four main subunits: a(1), b(1), b'(1) and c(9-12).

It localises to the plastid. Its subcellular location is the chloroplast thylakoid membrane. It carries out the reaction ATP + H2O + 4 H(+)(in) = ADP + phosphate + 5 H(+)(out). Its function is as follows. Produces ATP from ADP in the presence of a proton gradient across the membrane. The catalytic sites are hosted primarily by the beta subunits. In Phalaenopsis aphrodite subsp. formosana (Moth orchid), this protein is ATP synthase subunit beta, chloroplastic.